An 886-amino-acid polypeptide reads, in one-letter code: DNA mismatch repair protein MutS (886 aa).

Position 641 to 648 (641 to 648 (GPNMAGKS)) interacts with ATP.

Belongs to the DNA mismatch repair MutS family.

This protein is involved in the repair of mismatches in DNA. It is possible that it carries out the mismatch recognition step. This protein has a weak ATPase activity. The protein is DNA mismatch repair protein MutS of Rickettsia akari (strain Hartford).